Reading from the N-terminus, the 70-residue chain is Small, acid-soluble spore protein alpha (70 aa).

It belongs to the alpha/beta-type SASP family.

Its function is as follows. SASP are bound to spore DNA. They are double-stranded DNA-binding proteins that cause DNA to change to an a-like conformation. They protect the DNA backbone from chemical and enzymatic cleavage and are thus involved in dormant spore's high resistance to UV light. The chain is Small, acid-soluble spore protein alpha from Paraclostridium bifermentans (Clostridium bifermentans).